Here is a 398-residue protein sequence, read N- to C-terminus: uncharacterized protein (398 aa).

The region spanning 21-253 is the Radical SAM core domain; it reads TNFGPTNLII…WQLTSTSEPE (233 aa). Positions 37, 41, and 44 each coordinate [4Fe-4S] cluster.

This sequence belongs to the radical SAM superfamily. Anaerobic sulfatase-maturating enzyme family. [4Fe-4S] cluster is required as a cofactor.

This is an uncharacterized protein from Synechocystis sp. (strain ATCC 27184 / PCC 6803 / Kazusa).